The following is a 409-amino-acid chain: NADH-quinone oxidoreductase subunit D 1 (409 aa).

This sequence belongs to the complex I 49 kDa subunit family. As to quaternary structure, NDH-1 is composed of 14 different subunits. Subunits NuoB, C, D, E, F, and G constitute the peripheral sector of the complex.

The protein localises to the cell inner membrane. It carries out the reaction a quinone + NADH + 5 H(+)(in) = a quinol + NAD(+) + 4 H(+)(out). Functionally, NDH-1 shuttles electrons from NADH, via FMN and iron-sulfur (Fe-S) centers, to quinones in the respiratory chain. The immediate electron acceptor for the enzyme in this species is believed to be ubiquinone. Couples the redox reaction to proton translocation (for every two electrons transferred, four hydrogen ions are translocated across the cytoplasmic membrane), and thus conserves the redox energy in a proton gradient. The polypeptide is NADH-quinone oxidoreductase subunit D 1 (Solibacter usitatus (strain Ellin6076)).